Reading from the N-terminus, the 351-residue chain is Mitogen-activated protein kinase 2 (351 aa).

The 289-residue stretch at 16–304 (YEILDVIGEG…AEEALQHNYL (289 aa)) folds into the Protein kinase domain. ATP-binding positions include 22–30 (IGEGAYGIV) and Lys-45. The active-site Proton acceptor is the Asp-140. Thr-176 carries the phosphothreonine modification. The TXY motif lies at 176 to 178 (TEY). The residue at position 178 (Tyr-178) is a Phosphotyrosine.

It belongs to the protein kinase superfamily. CMGC Ser/Thr protein kinase family. MAP kinase subfamily. It depends on Mg(2+) as a cofactor. Mn(2+) is required as a cofactor. In terms of processing, dually phosphorylated on Thr-176 and Tyr-178, which activates the enzyme.

The protein resides in the nucleus. The catalysed reaction is L-seryl-[protein] + ATP = O-phospho-L-seryl-[protein] + ADP + H(+). The enzyme catalyses L-threonyl-[protein] + ATP = O-phospho-L-threonyl-[protein] + ADP + H(+). With respect to regulation, activated by tyrosine and threonine phosphorylation. Inhibited by the MEK inhibitor U0126 but not by the p38 inhibitor SB203580. Cobalt abolishes kinase activity, while calcium, copper and nickel have little effect on kinase activity. Functionally, serine-threonine protein kinase which may be involved in pheromone signaling. Functionally complements the MAPK pheromone signaling pathway in S.cerevisiae. The polypeptide is Mitogen-activated protein kinase 2 (Pneumocystis carinii).